The chain runs to 240 residues: Urease accessory protein UreF (240 aa).

This sequence belongs to the UreF family. In terms of assembly, ureD, UreF and UreG form a complex that acts as a GTP-hydrolysis-dependent molecular chaperone, activating the urease apoprotein by helping to assemble the nickel containing metallocenter of UreC. The UreE protein probably delivers the nickel.

The protein localises to the cytoplasm. Functionally, required for maturation of urease via the functional incorporation of the urease nickel metallocenter. The polypeptide is Urease accessory protein UreF (Bradyrhizobium sp. (strain ORS 278)).